We begin with the raw amino-acid sequence, 423 residues long: MIKKEMIAMLLAGGQGSRLGVLTSKVAKPAVAFGGKYRIIDFPLSNCINSGIDTVGVLTQYQPLRLNTHIGIGIPWDLDRNVGGVSVLPPYEKSQNSEWYTGTANAIYQNLEYMEQYHPEYVLILSGDHIYKMDYKIMLDYHKANNADITIAAMPVPMEEASRFGVVVTDNDNKITEFEEKPEHPKSNLASMGIYIFSWKVLKDALIKLKDQQECDFGKHVIPYCFNNNKRIFAYEYNGYWKDVGTLSSYWEANMELIDIIPIFNLYEEFWKIYTKTDTIPPQYIAKDAYIEKSIIGDGTEVYGRVFNSVIGSGVVIEEGCVIRDSIIMNNSHIGKNTTITKSIIAEDVTIGENVELGVGEEAENVKFPKIYNSGLVTVGEWSVIPDNVKVGKNTAISGETTLQDYPNGELPGGGIIIKAGDN.

Residues Y100, G165, 180 to 181 (EK), and S191 each bind alpha-D-glucose 1-phosphate.

It belongs to the bacterial/plant glucose-1-phosphate adenylyltransferase family. In terms of assembly, homotetramer.

The catalysed reaction is alpha-D-glucose 1-phosphate + ATP + H(+) = ADP-alpha-D-glucose + diphosphate. The protein operates within glycan biosynthesis; glycogen biosynthesis. Involved in the biosynthesis of ADP-glucose, a building block required for the elongation reactions to produce glycogen. Catalyzes the reaction between ATP and alpha-D-glucose 1-phosphate (G1P) to produce pyrophosphate and ADP-Glc. In Lachnospira eligens (strain ATCC 27750 / DSM 3376 / VPI C15-48 / C15-B4) (Eubacterium eligens), this protein is Glucose-1-phosphate adenylyltransferase.